We begin with the raw amino-acid sequence, 476 residues long: MTANALFPLFANLHDRAVLVVGGGKVAERKTEALLKVGALPIIGAPSLTTSLQRWAETGRITWRQGTFEDSWLQEDIWLVIAATDQPEVNHAAARAAHAQRLFVNVVDDIALSNVQVPAVVERGPLRIAISSGGGAPMVARYLRQQLESLIDDSWGRLTTLFAQRRDTIRARYPNIEARRRFFETQLAGPLQRLLRKQRHAEAEAVLEAALAETPLTESGSVTLVGAGAGDAGLLTLNALRALNEADIILYDRLVSDTVLQMARRDAEQIEVGKSATGHSVRQEDIHTLMLQHAHAGQRVVRLKGGDPFVFGRGGEELEFLRTHGIPYEVIPGITAALACAAYAGIPLTHRDHAQSLCLITAHCQSSLDTLDWAALAQERQTLTFYMGVAGLPTIQQRLCEAGRAETTPFALIENGARAQQRVLTGTLKTLAHTAQTYAVRPPALLILGEVTALAEHLHWFGTAPLSAPCPPARIL.

The segment at 1–207 (MTANALFPLF…QRHAEAEAVL (207 aa)) is precorrin-2 dehydrogenase /sirohydrochlorin ferrochelatase. NAD(+) is bound by residues 25–26 (KV) and 46–47 (PS). Ser132 is modified (phosphoserine). Residues 220-476 (GSVTLVGAGA…SAPCPPARIL (257 aa)) form a uroporphyrinogen-III C-methyltransferase region. Residue Asp252 is the Proton acceptor of the active site. Lys274 functions as the Proton donor in the catalytic mechanism. Residues 305 to 307 (GGD), Val310, 335 to 336 (TA), Met387, and Gly416 contribute to the S-adenosyl-L-methionine site.

The protein in the N-terminal section; belongs to the precorrin-2 dehydrogenase / sirohydrochlorin ferrochelatase family. This sequence in the C-terminal section; belongs to the precorrin methyltransferase family.

It carries out the reaction uroporphyrinogen III + 2 S-adenosyl-L-methionine = precorrin-2 + 2 S-adenosyl-L-homocysteine + H(+). The catalysed reaction is precorrin-2 + NAD(+) = sirohydrochlorin + NADH + 2 H(+). It catalyses the reaction siroheme + 2 H(+) = sirohydrochlorin + Fe(2+). Its pathway is cofactor biosynthesis; adenosylcobalamin biosynthesis; precorrin-2 from uroporphyrinogen III: step 1/1. It participates in cofactor biosynthesis; adenosylcobalamin biosynthesis; sirohydrochlorin from precorrin-2: step 1/1. The protein operates within porphyrin-containing compound metabolism; siroheme biosynthesis; precorrin-2 from uroporphyrinogen III: step 1/1. It functions in the pathway porphyrin-containing compound metabolism; siroheme biosynthesis; siroheme from sirohydrochlorin: step 1/1. Its pathway is porphyrin-containing compound metabolism; siroheme biosynthesis; sirohydrochlorin from precorrin-2: step 1/1. In terms of biological role, multifunctional enzyme that catalyzes the SAM-dependent methylations of uroporphyrinogen III at position C-2 and C-7 to form precorrin-2 via precorrin-1. Then it catalyzes the NAD-dependent ring dehydrogenation of precorrin-2 to yield sirohydrochlorin. Finally, it catalyzes the ferrochelation of sirohydrochlorin to yield siroheme. This Xylella fastidiosa (strain M12) protein is Siroheme synthase.